Consider the following 247-residue polypeptide: Ribonuclease 3 (247 aa).

The 129-residue stretch at 21–149 (LQKLSKKIGI…LVGAIYLDQG (129 aa)) folds into the RNase III domain. Residue glutamate 62 coordinates Mg(2+). Residue aspartate 66 is part of the active site. Mg(2+) contacts are provided by asparagine 135 and glutamate 138. Glutamate 138 is an active-site residue. Positions 176–245 (DYKTQLQEYS…AKELYNRIRK (70 aa)) constitute a DRBM domain.

The protein belongs to the ribonuclease III family. Homodimer. Mg(2+) is required as a cofactor.

It is found in the cytoplasm. It catalyses the reaction Endonucleolytic cleavage to 5'-phosphomonoester.. Functionally, digests double-stranded RNA. Involved in the processing of primary rRNA transcript to yield the immediate precursors to the large and small rRNAs (23S and 16S). Processes some mRNAs, and tRNAs when they are encoded in the rRNA operon. Processes pre-crRNA and tracrRNA of type II CRISPR loci if present in the organism. The chain is Ribonuclease 3 from Leptospira interrogans serogroup Icterohaemorrhagiae serovar copenhageni (strain Fiocruz L1-130).